A 399-amino-acid polypeptide reads, in one-letter code: Galactokinase (399 aa).

Residue 42–45 (EHTD) coordinates substrate. ATP contacts are provided by residues Ser76 and 133–139 (ASGLSSS). Residues Ser139 and Glu171 each contribute to the Mg(2+) site. Catalysis depends on Asp183, which acts as the Proton acceptor. Tyr233 is a substrate binding site.

The protein belongs to the GHMP kinase family. GalK subfamily.

It localises to the cytoplasm. The catalysed reaction is alpha-D-galactose + ATP = alpha-D-galactose 1-phosphate + ADP + H(+). It participates in carbohydrate metabolism; galactose metabolism. Its function is as follows. Catalyzes the transfer of the gamma-phosphate of ATP to D-galactose to form alpha-D-galactose-1-phosphate (Gal-1-P). This Lactococcus lactis subsp. cremoris (strain MG1363) protein is Galactokinase.